The following is a 363-amino-acid chain: tRNA N6-adenosine threonylcarbamoyltransferase (363 aa).

Residues His121 and His125 each coordinate Fe cation. Substrate is bound by residues 143-147 (LASGG), Asp176, Gly189, and Asn287. Asp315 lines the Fe cation pocket.

It belongs to the KAE1 / TsaD family. Fe(2+) serves as cofactor.

The protein localises to the cytoplasm. The catalysed reaction is L-threonylcarbamoyladenylate + adenosine(37) in tRNA = N(6)-L-threonylcarbamoyladenosine(37) in tRNA + AMP + H(+). Functionally, required for the formation of a threonylcarbamoyl group on adenosine at position 37 (t(6)A37) in tRNAs that read codons beginning with adenine. Is involved in the transfer of the threonylcarbamoyl moiety of threonylcarbamoyl-AMP (TC-AMP) to the N6 group of A37, together with TsaE and TsaB. TsaD likely plays a direct catalytic role in this reaction. This is tRNA N6-adenosine threonylcarbamoyltransferase from Rhodopseudomonas palustris (strain BisB5).